The sequence spans 148 residues: Glutamyl-tRNA(Gln) amidotransferase subunit C, mitochondrial (148 aa).

The protein belongs to the GatC family. In terms of assembly, subunit of the heterotrimeric GatCAB amidotransferase (AdT) complex, composed of A, B and C subunits.

It localises to the mitochondrion. The enzyme catalyses L-glutamyl-tRNA(Gln) + L-glutamine + ATP + H2O = L-glutaminyl-tRNA(Gln) + L-glutamate + ADP + phosphate + H(+). Its function is as follows. Allows the formation of correctly charged Gln-tRNA(Gln) through the transamidation of misacylated Glu-tRNA(Gln) in the mitochondria. The reaction takes place in the presence of glutamine and ATP through an activated gamma-phospho-Glu-tRNA(Gln). The sequence is that of Glutamyl-tRNA(Gln) amidotransferase subunit C, mitochondrial from Drosophila sechellia (Fruit fly).